Here is a 605-residue protein sequence, read N- to C-terminus: IQ domain-containing protein IQM2 (605 aa).

One can recognise an IQ domain in the interval 105–134; it reads KHEAAIKLQKVYKSFRTRRKLADCAVLVEQ. Residues 408-505 form a disordered region; the sequence is QDKVDPSGEE…EEGETKESEV (98 aa). The segment covering 425-440 has biased composition (basic and acidic residues); sequence SISRKQSDLETPEKME. A compositionally biased stretch (acidic residues) spans 462-480; the sequence is DYDSGDDEEEEEEMFELEQ. Over residues 481-490 the composition is skewed to low complexity; that stretch reads ESMPSEQSSP. Over residues 491 to 505 the composition is skewed to basic and acidic residues; that stretch reads RGEEKEEGETKESEV.

In terms of tissue distribution, expressed in rosette and cauline leaves, stems, flowers and siliques, and at lower levels in roots.

Its subcellular location is the cytoplasm. The protein resides in the nucleus. In terms of biological role, may be involved in biotic and abiotic stress responses. This Arabidopsis thaliana (Mouse-ear cress) protein is IQ domain-containing protein IQM2.